Here is a 98-residue protein sequence, read N- to C-terminus: Small ribosomal subunit protein bS6 (98 aa).

Belongs to the bacterial ribosomal protein bS6 family.

Functionally, binds together with bS18 to 16S ribosomal RNA. This chain is Small ribosomal subunit protein bS6, found in Limosilactobacillus reuteri (strain DSM 20016) (Lactobacillus reuteri).